The chain runs to 160 residues: Cyanate hydratase (160 aa).

Residues Arg-100, Glu-103, and Ser-126 contribute to the active site.

The protein belongs to the cyanase family.

The catalysed reaction is cyanate + hydrogencarbonate + 3 H(+) = NH4(+) + 2 CO2. Catalyzes the reaction of cyanate with bicarbonate to produce ammonia and carbon dioxide. The sequence is that of Cyanate hydratase from Arthroderma otae (strain ATCC MYA-4605 / CBS 113480) (Microsporum canis).